The primary structure comprises 658 residues: UvrABC system protein B (658 aa).

Residues 25-178 (KSLKNKNHYQ…KSFLLKLVEM (154 aa)) enclose the Helicase ATP-binding domain. Residue 38–45 (GVTGSGKT) coordinates ATP. A Beta-hairpin motif is present at residues 91 to 114 (HFDYYQPESYIPRRDLFIEKDSSI). The region spanning 433–607 (QVQDLFDEIK…ELKLRDDETK (175 aa)) is the Helicase C-terminal domain. Residues 623–658 (EKIIKELDKKMRECAKNLDFEEAMHLRDEIAKLRTL) enclose the UVR domain.

It belongs to the UvrB family. As to quaternary structure, forms a heterotetramer with UvrA during the search for lesions. Interacts with UvrC in an incision complex.

It is found in the cytoplasm. Functionally, the UvrABC repair system catalyzes the recognition and processing of DNA lesions. A damage recognition complex composed of 2 UvrA and 2 UvrB subunits scans DNA for abnormalities. Upon binding of the UvrA(2)B(2) complex to a putative damaged site, the DNA wraps around one UvrB monomer. DNA wrap is dependent on ATP binding by UvrB and probably causes local melting of the DNA helix, facilitating insertion of UvrB beta-hairpin between the DNA strands. Then UvrB probes one DNA strand for the presence of a lesion. If a lesion is found the UvrA subunits dissociate and the UvrB-DNA preincision complex is formed. This complex is subsequently bound by UvrC and the second UvrB is released. If no lesion is found, the DNA wraps around the other UvrB subunit that will check the other stand for damage. This chain is UvrABC system protein B, found in Helicobacter acinonychis (strain Sheeba).